A 127-amino-acid chain; its full sequence is Evasin P467 (127 aa).

The N-terminal stretch at 1-21 (MALKACITVIAVVYVVQVVRG) is a signal peptide. Intrachain disulfides connect cysteine 42/cysteine 63, cysteine 59/cysteine 100, cysteine 76/cysteine 105, and cysteine 95/cysteine 114. N-linked (GlcNAc...) asparagine glycosylation is found at asparagine 49 and asparagine 94.

The protein localises to the secreted. Its function is as follows. Salivary chemokine-binding protein which binds to host chemokines CCL1, CCL2, CCL3 and CCL5. This is Evasin P467 from Rhipicephalus pulchellus (Yellow backed tick).